The primary structure comprises 274 residues: Diaminopimelate epimerase (274 aa).

Substrate-binding residues include asparagine 11, glutamine 44, and asparagine 64. Residue cysteine 73 is the Proton donor of the active site. Substrate-binding positions include 74–75, asparagine 157, asparagine 190, and 208–209; these read GN and ER. Catalysis depends on cysteine 217, which acts as the Proton acceptor. Substrate is bound at residue 218–219; it reads GS.

It belongs to the diaminopimelate epimerase family. Homodimer.

The protein resides in the cytoplasm. It catalyses the reaction (2S,6S)-2,6-diaminopimelate = meso-2,6-diaminopimelate. It functions in the pathway amino-acid biosynthesis; L-lysine biosynthesis via DAP pathway; DL-2,6-diaminopimelate from LL-2,6-diaminopimelate: step 1/1. Functionally, catalyzes the stereoinversion of LL-2,6-diaminopimelate (L,L-DAP) to meso-diaminopimelate (meso-DAP), a precursor of L-lysine and an essential component of the bacterial peptidoglycan. The polypeptide is Diaminopimelate epimerase (Shigella flexneri serotype 5b (strain 8401)).